The chain runs to 482 residues: E3 ubiquitin-protein ligase parkin (482 aa).

The Ubiquitin-like domain maps to 30 to 99 (LSIYVKTNTG…LGQQSVLHAI (70 aa)). Ser-94 carries the post-translational modification Phosphoserine; by Pink1. The segment at 157 to 246 (AHFFVHCSQC…SGGEKDFAAP (90 aa)) adopts an RING-type 0; atypical zinc-finger fold. Positions 163, 166, 178, and 181 each coordinate Zn(2+). The residue at position 187 (Thr-187) is a Phosphothreonine; by Pink1. 21 residues coordinate Zn(2+): Cys-208, Cys-232, His-235, Cys-259, Cys-262, Cys-274, His-278, Cys-281, Cys-284, Cys-310, Cys-314, Cys-353, Cys-358, Cys-373, Cys-377, Cys-382, Cys-385, His-390, Cys-394, Cys-436, and Cys-439. A TRIAD supradomain region spans residues 255 to 482 (KNVPCLACTD…RDCMGAHWFG (228 aa)). The RING-type 1 zinc-finger motif lies at 259–314 (CLACTDVSDTVLVFPCASQHVTCIDCFRHYCRSRLGERQFMPHPDFGYTLPCPAGC). 2 consecutive IBR-type zinc fingers follow at residues 334–394 (DRYQ…IGEC) and 432–473 (STKP…EWTR). An RING-type 2; atypical zinc finger spans residues 436–467 (CPKCRTPTERDGGCMHMVCTRAGCGFEWCWVC). Cys-449 is a catalytic residue. 6 residues coordinate Zn(2+): Cys-454, Cys-459, Cys-464, Cys-467, Cys-475, and His-479.

Belongs to the RBR family. Parkin subfamily. As to quaternary structure, forms an E3 ubiquitin ligase complex with E2 ubiquitin-conjugating enzymes. Interacts with Pink1. Interacts with Marf. Interacts with Paris. Interacts with septins Septin1 and pnut. Post-translationally, auto-ubiquitinates in an E2-dependent manner leading to its own degradation. Phosphorylated. Activation requires phosphorylation at Ser-94 by Pink1 and binding to Pink1-phosphorylated polyubiquitin chains. Phosphorylation at Thr-187 by Pink1 is also important for mitochondrial localization. As to expression, in oocytes, accumulates in early egg chambers where it is enriched until stages 9-10, localizing mainly to the posterior pole and anterior margin (at protein level). After stage 10 it is no longer detected in the oocyte (at protein level). In embryos, ubiquitously expressed in the early stages (stages 2 to 5) (at protein level). Expression levels decrease at later stages and becomes restricted to the brain and nerve cord from stage 9 (at protein level). Relatively higher levels of expression in the head compared to the body. Enriched in the dorsomedial (DM) dopaminergic neurons.

It localises to the mitochondrion. Its subcellular location is the cytoplasm. The protein resides in the cytosol. The enzyme catalyses [E2 ubiquitin-conjugating enzyme]-S-ubiquitinyl-L-cysteine + [acceptor protein]-L-lysine = [E2 ubiquitin-conjugating enzyme]-L-cysteine + [acceptor protein]-N(6)-ubiquitinyl-L-lysine.. Its pathway is protein modification; protein ubiquitination. In the autoinhibited state the side chain of Phe-481 inserts into a hydrophobic groove in RING-0, occluding the ubiquitin acceptor site Cys-449, whereas the REP repressor element binds RING-1 and blocks its E2-binding site. Activation of park requires 2 steps: (1) phosphorylation at Ser-94 by Pink1 and (2) binding to phosphorylated ubiquitin, leading to unlock repression of the catalytic Cys-449 by the RING-0 region via an allosteric mechanism and converting park to its fully-active form. According to another report, phosphorylation at Ser-94 by Pink1 is not essential for activation and only binding to phosphorylated ubiquitin is essential to unlock repression. In terms of biological role, E3 ubiquitin-protein ligase which accepts ubiquitin from E2 ubiquitin-conjugating enzymes in the form of a thioester and then directly transfers the ubiquitin to targeted substrates, such as Paris, Marf, Opa1, Miro, pnut, Septin1, Tom20 and porin. Mediates monoubiquitination as well as 'Lys-6', 'Lys-11', 'Lys-48'-linked and 'Lys-63'-linked polyubiquitination of substrates, depending on the context. Protects against mitochondrial dysfunction during cellular stress, by acting downstream of Pink1, to coordinate mitochondrial quality control mechanisms that remove and replace dysfunctional mitochondrial components. Depending on the severity of mitochondrial damage and/or dysfunction, activity ranges from preventing apoptosis and stimulating mitochondrial biogenesis to regulating mitochondrial dynamics and eliminating severely damaged mitochondria via mitophagy. Appears to be particularly important in maintaining the physiology and function of cells with high energy demands that are undergoing stress or altered metabolic environment, including spermatids, muscle cells and neurons such as the dopaminergic (DA) neurons. Activation and recruitment onto the outer membrane of damaged/dysfunctional mitochondria (OMM) requires Pink1-mediated phosphorylation of both park and ubiquitin. In depolarized mitochondria, mediates the decision between mitophagy or preventing apoptosis by inducing either the poly- or monoubiquitination of porin/VDAC; polyubiquitination of porin promotes mitophagy, while monoubiquitination of porin decreases mitochondrial calcium influx which ultimately inhibits apoptosis. When cellular stress results in irreversible mitochondrial damage, promotes the autophagic degradation of dysfunctional depolarized mitochondria (mitophagy) by promoting the ubiquitination of mitochondrial proteins. Preferentially assembles 'Lys-6'-, 'Lys-11'- and 'Lys-63'-linked polyubiquitin chains following mitochondrial damage, leading to mitophagy. In developing tissues, inhibits JNK-mediated apoptosis by negatively regulating bsk transcription. The Pink1-park pathway also promotes fission and/or inhibits fusion of damaged mitochondria by mediating the ubiquitination and subsequent degradation of proteins involved in mitochondrial fusion/fission such as Marf, Opa1 and fzo. This prevents the refusion of unhealthy mitochondria with the healthy mitochondrial network and/or initiates mitochondrial fragmentation facilitating their later engulfment by autophagosomes. Regulates motility of damaged mitochondria by phosphorylating Miro which likely promotes its park-dependent degradation by the proteasome; in motor neurons, this inhibits mitochondrial intracellular anterograde transport along the axons which probably increases the chance of the mitochondria being eliminated in the soma. The Pink1-park pathway is also involved in mitochondrial regeneration processes such as promoting mitochondrial biogenesis, activating localized mitochondrial repair, promoting selective turnover of mitochondrial proteins and initiating the mitochondrial import of endogenous proteins. Involved in mitochondrial biogenesis via the ubiquitination of transcriptional repressor Paris which leads to its subsequent proteasomal degradation and allows activation of the transcription factor srl. Promotes localized mitochondrial repair by activating the translation of specific nuclear-encoded mitochondrial RNAs (nc-mtRNAs) on the mitochondrial surface, including several key electron transport chain component nc-mtRNAs. This Drosophila melanogaster (Fruit fly) protein is E3 ubiquitin-protein ligase parkin.